Reading from the N-terminus, the 602-residue chain is Aspartate--tRNA(Asp/Asn) ligase (602 aa).

Glutamate 175 contributes to the L-aspartate binding site. The tract at residues 199 to 202 (QIFK) is aspartate. Arginine 221 contacts L-aspartate. ATP is bound by residues 221–223 (RDE) and glutamine 230. An L-aspartate-binding site is contributed by histidine 458. Glutamate 492 is a binding site for ATP. Arginine 499 provides a ligand contact to L-aspartate. 544–547 (GLDR) contributes to the ATP binding site.

This sequence belongs to the class-II aminoacyl-tRNA synthetase family. Type 1 subfamily. As to quaternary structure, homodimer.

Its subcellular location is the cytoplasm. The catalysed reaction is tRNA(Asx) + L-aspartate + ATP = L-aspartyl-tRNA(Asx) + AMP + diphosphate. In terms of biological role, aspartyl-tRNA synthetase with relaxed tRNA specificity since it is able to aspartylate not only its cognate tRNA(Asp) but also tRNA(Asn). Reaction proceeds in two steps: L-aspartate is first activated by ATP to form Asp-AMP and then transferred to the acceptor end of tRNA(Asp/Asn). The protein is Aspartate--tRNA(Asp/Asn) ligase of Cupriavidus taiwanensis (strain DSM 17343 / BCRC 17206 / CCUG 44338 / CIP 107171 / LMG 19424 / R1) (Ralstonia taiwanensis (strain LMG 19424)).